A 345-amino-acid polypeptide reads, in one-letter code: Mycothiol acetyltransferase (345 aa).

N-acetyltransferase domains lie at 6–149 and 164–345; these read DTYE…KAME and FEVL…RGRL. Glu-39 provides a ligand contact to 1D-myo-inositol 2-(L-cysteinylamino)-2-deoxy-alpha-D-glucopyranoside. 76–78 is an acetyl-CoA binding site; it reads LAV. The 1D-myo-inositol 2-(L-cysteinylamino)-2-deoxy-alpha-D-glucopyranoside site is built by Glu-198, Lys-261, and Glu-277. Acetyl-CoA contacts are provided by residues 281–283 and 288–294; these read VCL and RGRGLGQ. 1D-myo-inositol 2-(L-cysteinylamino)-2-deoxy-alpha-D-glucopyranoside is bound at residue Tyr-315.

This sequence belongs to the acetyltransferase family. MshD subfamily. Monomer.

The enzyme catalyses 1D-myo-inositol 2-(L-cysteinylamino)-2-deoxy-alpha-D-glucopyranoside + acetyl-CoA = mycothiol + CoA + H(+). In terms of biological role, catalyzes the transfer of acetyl from acetyl-CoA to desacetylmycothiol (Cys-GlcN-Ins) to form mycothiol. This chain is Mycothiol acetyltransferase, found in Corynebacterium jeikeium (strain K411).